The following is a 400-amino-acid chain: Chorismate synthase (400 aa).

Residues R40 and R46 each contribute to the NADP(+) site. FMN is bound by residues 135–137 (RAS), 257–258 (QA), G301, 316–320 (KPIST), and R342.

Belongs to the chorismate synthase family. As to quaternary structure, homotetramer. The cofactor is FMNH2.

It catalyses the reaction 5-O-(1-carboxyvinyl)-3-phosphoshikimate = chorismate + phosphate. The protein operates within metabolic intermediate biosynthesis; chorismate biosynthesis; chorismate from D-erythrose 4-phosphate and phosphoenolpyruvate: step 7/7. Catalyzes the anti-1,4-elimination of the C-3 phosphate and the C-6 proR hydrogen from 5-enolpyruvylshikimate-3-phosphate (EPSP) to yield chorismate, which is the branch point compound that serves as the starting substrate for the three terminal pathways of aromatic amino acid biosynthesis. This reaction introduces a second double bond into the aromatic ring system. This Tropheryma whipplei (strain TW08/27) (Whipple's bacillus) protein is Chorismate synthase.